A 188-amino-acid polypeptide reads, in one-letter code: dCTP deaminase (188 aa).

DCTP contacts are provided by residues 111 to 116, 135 to 137, Q156, Y170, and Q180; these read KSTYAR and TLE. Residue E137 is the Proton donor/acceptor of the active site.

It belongs to the dCTP deaminase family. In terms of assembly, homotrimer.

It carries out the reaction dCTP + H2O + H(+) = dUTP + NH4(+). Its pathway is pyrimidine metabolism; dUMP biosynthesis; dUMP from dCTP (dUTP route): step 1/2. Its function is as follows. Catalyzes the deamination of dCTP to dUTP. In Francisella tularensis subsp. tularensis (strain FSC 198), this protein is dCTP deaminase.